The chain runs to 420 residues: Gamma-glutamyl phosphate reductase (420 aa).

It belongs to the gamma-glutamyl phosphate reductase family.

The protein resides in the cytoplasm. It catalyses the reaction L-glutamate 5-semialdehyde + phosphate + NADP(+) = L-glutamyl 5-phosphate + NADPH + H(+). The protein operates within amino-acid biosynthesis; L-proline biosynthesis; L-glutamate 5-semialdehyde from L-glutamate: step 2/2. Catalyzes the NADPH-dependent reduction of L-glutamate 5-phosphate into L-glutamate 5-semialdehyde and phosphate. The product spontaneously undergoes cyclization to form 1-pyrroline-5-carboxylate. The sequence is that of Gamma-glutamyl phosphate reductase from Streptococcus pneumoniae (strain JJA).